The chain runs to 195 residues: Imidazoleglycerol-phosphate dehydratase (195 aa).

The protein belongs to the imidazoleglycerol-phosphate dehydratase family.

The protein localises to the cytoplasm. It catalyses the reaction D-erythro-1-(imidazol-4-yl)glycerol 3-phosphate = 3-(imidazol-4-yl)-2-oxopropyl phosphate + H2O. Its pathway is amino-acid biosynthesis; L-histidine biosynthesis; L-histidine from 5-phospho-alpha-D-ribose 1-diphosphate: step 6/9. This is Imidazoleglycerol-phosphate dehydratase from Campylobacter curvus (strain 525.92).